Consider the following 438-residue polypeptide: sn-glycerol-3-phosphate-binding periplasmic protein UgpB (438 aa).

An N-terminal signal peptide occupies residues 1–23; that stretch reads MKPLRYTASALALGLALMANAQA. Sn-glycerol 3-phosphate contacts are provided by tyrosine 65, glutamate 89, serine 144, serine 270, glycine 307, tyrosine 346, and arginine 397.

This sequence belongs to the bacterial solute-binding protein 1 family. The complex is composed of two ATP-binding proteins (UgpC), two transmembrane proteins (UgpA and UgpE) and a solute-binding protein (UgpB).

It localises to the periplasm. Part of the ABC transporter complex UgpBAEC involved in sn-glycerol-3-phosphate (G3P) import. Binds G3P. In Escherichia coli O6:K15:H31 (strain 536 / UPEC), this protein is sn-glycerol-3-phosphate-binding periplasmic protein UgpB (ugpB).